The sequence spans 306 residues: L-lactate dehydrogenase (306 aa).

Residues Val-11, Asp-32, Lys-37, and Gly-76–Ala-77 each bind NAD(+). Substrate-binding residues include Gln-79 and Arg-85. NAD(+) is bound by residues Ser-98, Val-115–Asn-117, and Ser-140. Asn-117–Asp-120 lines the substrate pocket. Asp-145–Arg-148 lines the substrate pocket. Beta-D-fructose 1,6-bisphosphate contacts are provided by Arg-150 and His-165. The active-site Proton acceptor is the His-172. Tyr-214 carries the post-translational modification Phosphotyrosine. Thr-223 provides a ligand contact to substrate.

Belongs to the LDH/MDH superfamily. LDH family. As to quaternary structure, homotetramer.

It localises to the cytoplasm. The enzyme catalyses (S)-lactate + NAD(+) = pyruvate + NADH + H(+). Its pathway is fermentation; pyruvate fermentation to lactate; (S)-lactate from pyruvate: step 1/1. Its activity is regulated as follows. Allosterically activated by fructose 1,6-bisphosphate (FBP). Functionally, catalyzes the conversion of lactate to pyruvate. This Synechococcus sp. (strain JA-3-3Ab) (Cyanobacteria bacterium Yellowstone A-Prime) protein is L-lactate dehydrogenase.